A 316-amino-acid polypeptide reads, in one-letter code: MNELDGIKQFTTVVADSGDIESIRHYHPQDATTNPSLLLKAAGLSQYEHLIDDAIAWGKKNGKTQEQQVVAACDKLAVNFGAEILKIVPGRVSTEVDARLSFDKEKSIEKARHLVDLYQQQGVEKSRILIKLASTWEGIRAAEELEKEGINCNLTLLFSFAQARACAEAGVFLISPFVGRIYDWYQARKPMDPYVVEEDPGVKSVRNIYDYYKQHHYETIVMGASFRRTEQILALTGCDRLTIAPNLLKELQEKVSPVVRKLIPPSQTFPRPAPMSEAEFRWEHNQYAMAVEKLSEGIRLFAVDQRKLEDLLAAKL.

The active-site Schiff-base intermediate with substrate is lysine 131.

It belongs to the transaldolase family. Type 1 subfamily. In terms of assembly, homodimer.

Its subcellular location is the cytoplasm. It carries out the reaction D-sedoheptulose 7-phosphate + D-glyceraldehyde 3-phosphate = D-erythrose 4-phosphate + beta-D-fructose 6-phosphate. It functions in the pathway carbohydrate degradation; pentose phosphate pathway; D-glyceraldehyde 3-phosphate and beta-D-fructose 6-phosphate from D-ribose 5-phosphate and D-xylulose 5-phosphate (non-oxidative stage): step 2/3. Functionally, transaldolase is important for the balance of metabolites in the pentose-phosphate pathway. This chain is Transaldolase 2, found in Shigella sonnei (strain Ss046).